Here is a 145-residue protein sequence, read N- to C-terminus: D-aminoacyl-tRNA deacylase (145 aa).

Residues 137 to 138 (GP) carry the Gly-cisPro motif, important for rejection of L-amino acids motif.

It belongs to the DTD family. As to quaternary structure, homodimer.

It is found in the cytoplasm. It catalyses the reaction glycyl-tRNA(Ala) + H2O = tRNA(Ala) + glycine + H(+). It carries out the reaction a D-aminoacyl-tRNA + H2O = a tRNA + a D-alpha-amino acid + H(+). In terms of biological role, an aminoacyl-tRNA editing enzyme that deacylates mischarged D-aminoacyl-tRNAs. Also deacylates mischarged glycyl-tRNA(Ala), protecting cells against glycine mischarging by AlaRS. Acts via tRNA-based rather than protein-based catalysis; rejects L-amino acids rather than detecting D-amino acids in the active site. By recycling D-aminoacyl-tRNA to D-amino acids and free tRNA molecules, this enzyme counteracts the toxicity associated with the formation of D-aminoacyl-tRNA entities in vivo and helps enforce protein L-homochirality. The chain is D-aminoacyl-tRNA deacylase from Lactobacillus acidophilus (strain ATCC 700396 / NCK56 / N2 / NCFM).